We begin with the raw amino-acid sequence, 242 residues long: ATP synthase subunit a (242 aa).

5 consecutive transmembrane segments (helical) span residues 28 to 48, 89 to 109, 128 to 148, 193 to 213, and 214 to 234; these read LHGQVFLSSWVVIGLLLLLVV, LPFVGTLFLFIFVCNWGGALI, INTTVAMALLVSLSYFYAGLS, LVVAVLAFLVPVLVPLPAMFL, and GLFTSAIQALIFATLAANYIG.

The protein belongs to the ATPase A chain family. As to quaternary structure, F-type ATPases have 2 components, CF(1) - the catalytic core - and CF(0) - the membrane proton channel. CF(1) has five subunits: alpha(3), beta(3), gamma(1), delta(1), epsilon(1). CF(0) has four main subunits: a, b, b' and c.

It localises to the cellular thylakoid membrane. Functionally, key component of the proton channel; it plays a direct role in the translocation of protons across the membrane. The polypeptide is ATP synthase subunit a (Synechococcus sp. (strain WH7803)).